A 297-amino-acid polypeptide reads, in one-letter code: GTPase Era (297 aa).

An Era-type G domain is found at 3–171 (KSGFVSIVGR…IKVIQNYLEE (169 aa)). A G1 region spans residues 11–18 (GRPNVGKS). Residue 11–18 (GRPNVGKS) participates in GTP binding. The G2 stretch occupies residues 37–41 (QTTRN). Residues 58 to 61 (DTPG) are G3. Residues 58–62 (DTPGI) and 120–123 (NKID) each bind GTP. A G4 region spans residues 120–123 (NKID). Residues 150–152 (ISA) form a G5 region. In terms of domain architecture, KH type-2 spans 194–280 (IREKVLHYLN…NLQLWVKVKE (87 aa)).

This sequence belongs to the TRAFAC class TrmE-Era-EngA-EngB-Septin-like GTPase superfamily. Era GTPase family. In terms of assembly, monomer.

It localises to the cytoplasm. The protein localises to the cell membrane. Functionally, an essential GTPase that binds both GDP and GTP, with rapid nucleotide exchange. Plays a role in 16S rRNA processing and 30S ribosomal subunit biogenesis and possibly also in cell cycle regulation and energy metabolism. The chain is GTPase Era from Clostridioides difficile (strain 630) (Peptoclostridium difficile).